We begin with the raw amino-acid sequence, 114 residues long: Large ribosomal subunit protein bL19 (114 aa).

Belongs to the bacterial ribosomal protein bL19 family.

This protein is located at the 30S-50S ribosomal subunit interface and may play a role in the structure and function of the aminoacyl-tRNA binding site. The chain is Large ribosomal subunit protein bL19 from Desulfatibacillum aliphaticivorans.